The sequence spans 445 residues: Phosphoglucosamine mutase (445 aa).

S102 acts as the Phosphoserine intermediate in catalysis. 4 residues coordinate Mg(2+): S102, D241, D243, and D245. S102 is modified (phosphoserine).

The protein belongs to the phosphohexose mutase family. Mg(2+) is required as a cofactor. In terms of processing, activated by phosphorylation.

The enzyme catalyses alpha-D-glucosamine 1-phosphate = D-glucosamine 6-phosphate. Functionally, catalyzes the conversion of glucosamine-6-phosphate to glucosamine-1-phosphate. This Escherichia coli O139:H28 (strain E24377A / ETEC) protein is Phosphoglucosamine mutase.